The sequence spans 236 residues: Peptidase E (236 aa).

Residues Ser122, Asp137, and His159 each act as charge relay system in the active site.

It belongs to the peptidase S51 family.

The protein localises to the cytoplasm. The catalysed reaction is Dipeptidase E catalyzes the hydrolysis of dipeptides Asp-|-Xaa. It does not act on peptides with N-terminal Glu, Asn or Gln, nor does it cleave isoaspartyl peptides.. Its function is as follows. Hydrolyzes dipeptides containing N-terminal aspartate residues. May play a role in allowing the cell to use peptide aspartate to spare carbon otherwise required for the synthesis of the aspartate family of amino acids. The sequence is that of Peptidase E from Shewanella sp. (strain MR-4).